Consider the following 156-residue polypeptide: Small ribosomal subunit protein uS7 (156 aa).

Belongs to the universal ribosomal protein uS7 family. In terms of assembly, part of the 30S ribosomal subunit. Contacts proteins S9 and S11.

In terms of biological role, one of the primary rRNA binding proteins, it binds directly to 16S rRNA where it nucleates assembly of the head domain of the 30S subunit. Is located at the subunit interface close to the decoding center, probably blocks exit of the E-site tRNA. This chain is Small ribosomal subunit protein uS7, found in Baumannia cicadellinicola subsp. Homalodisca coagulata.